The chain runs to 146 residues: Oxygen-independent coproporphyrinogen III oxidase (146 aa).

Tyrosine 54 serves as a coordination point for S-adenosyl-L-methionine. The [4Fe-4S] cluster site is built by cysteine 60 and cysteine 64. Phenylalanine 66 provides a ligand contact to S-adenosyl-L-methionine. Cysteine 67 contacts [4Fe-4S] cluster. S-adenosyl-L-methionine is bound by residues 111–112 and glutamate 143; that span reads GT.

It belongs to the anaerobic coproporphyrinogen-III oxidase family. In terms of assembly, monomer. Requires [4Fe-4S] cluster as cofactor.

It is found in the cytoplasm. It carries out the reaction coproporphyrinogen III + 2 S-adenosyl-L-methionine = protoporphyrinogen IX + 2 5'-deoxyadenosine + 2 L-methionine + 2 CO2. The protein operates within porphyrin-containing compound metabolism; protoporphyrin-IX biosynthesis; protoporphyrinogen-IX from coproporphyrinogen-III (AdoMet route): step 1/1. Involved in the heme biosynthesis. Catalyzes the anaerobic oxidative decarboxylation of propionate groups of rings A and B of coproporphyrinogen III to yield the vinyl groups in protoporphyrinogen IX. This Mannheimia haemolytica (Pasteurella haemolytica) protein is Oxygen-independent coproporphyrinogen III oxidase (hemN).